We begin with the raw amino-acid sequence, 290 residues long: Translin-associated protein X (290 aa).

The disordered stretch occupies residues 1–34 (MNGKEGPGGFRKRKHDNFPHNQRREGKDASSSSP). Over residues 16 to 28 (DNFPHNQRREGKD) the composition is skewed to basic and acidic residues. The interval 73–208 (LLHRITSAPD…MRMCINSVGN (136 aa)) is interaction with C1D. Residues Glu129 and Glu197 each contribute to the Mg(2+) site. Lys279 participates in a covalent cross-link: Glycyl lysine isopeptide (Lys-Gly) (interchain with G-Cter in SUMO2).

This sequence belongs to the translin family. Ring-shaped heterooctamer of six TSN and two TSNAX subunits. Interacts with GOLGA3, TSNAXIP1, SUN1 and AKAP9. Interacts with the homodimeric form of C1D following gamma-radiation. Interacts with TSN and C1D in a mutually exclusive manner. Sumoylated with SUMO1. In terms of tissue distribution, detected in cerebellum.

It localises to the cytoplasm. The protein resides in the perinuclear region. Its subcellular location is the golgi apparatus. The protein localises to the nucleus. In terms of biological role, acts in combination with TSN as an endonuclease involved in the activation of the RNA-induced silencing complex (RISC). Possible role in spermatogenesis. The protein is Translin-associated protein X (Tsnax) of Rattus norvegicus (Rat).